We begin with the raw amino-acid sequence, 100 residues long: Carboxysome shell vertex protein CcmL (100 aa).

One can recognise a BMV domain in the interval 1-83 (MQIGRVRGTV…VDAVVIGIID (83 aa)).

This sequence belongs to the CcmL/EutN family. CcmL subfamily. Homopentamer. Interacts with full-length CcmM.

The protein localises to the carboxysome. Functionally, probably forms vertices in the carboxysome, a polyhedral inclusion where RuBisCO (ribulose bisphosphate carboxylase, rbcL-rbcS) is sequestered. Has been modeled to induce curvature upon insertion into an otherwise flat hexagonal molecular layer of CcmK subunits. This is Carboxysome shell vertex protein CcmL from Gloeobacter violaceus (strain ATCC 29082 / PCC 7421).